The following is a 297-amino-acid chain: MSDTDRRILFVHAHPDDESISTGATMAKYAAEGAHVCLVTCTLGEEGEIIPEELRHLASDKEDRLGEFRIGELKEACAALGVTDHRFLGGAGRWRDSGMMGAPSNDHPRCFWRADVEEAARLLAEIIREVRPQVIVTYDEHGHYGHPDHIQAHRVTVRARELAADPAHGEGEPWSAAKLYATATPRTVLARSIALMRDSRHPFERVSSIDQLGYGVPDDQVTTVVDARAHLPAKLAALRAHRTQVVVASEGPFFALSNNIGQQAFGAEYYTLLDGPRGPAVADGRESGLFSGLPGLE.

Zn(2+)-binding residues include H14, D17, and H149.

It belongs to the MshB deacetylase family. It depends on Zn(2+) as a cofactor.

The enzyme catalyses 1D-myo-inositol 2-acetamido-2-deoxy-alpha-D-glucopyranoside + H2O = 1D-myo-inositol 2-amino-2-deoxy-alpha-D-glucopyranoside + acetate. Its function is as follows. Catalyzes the deacetylation of 1D-myo-inositol 2-acetamido-2-deoxy-alpha-D-glucopyranoside (GlcNAc-Ins) in the mycothiol biosynthesis pathway. This chain is 1D-myo-inositol 2-acetamido-2-deoxy-alpha-D-glucopyranoside deacetylase, found in Thermomonospora curvata (strain ATCC 19995 / DSM 43183 / JCM 3096 / KCTC 9072 / NBRC 15933 / NCIMB 10081 / Henssen B9).